The chain runs to 63 residues: DNA gyrase inhibitor YacG (63 aa).

Residues C9, C12, C28, and C32 each coordinate Zn(2+).

Belongs to the DNA gyrase inhibitor YacG family. In terms of assembly, interacts with GyrB. The cofactor is Zn(2+).

In terms of biological role, inhibits all the catalytic activities of DNA gyrase by preventing its interaction with DNA. Acts by binding directly to the C-terminal domain of GyrB, which probably disrupts DNA binding by the gyrase. The polypeptide is DNA gyrase inhibitor YacG (Salmonella arizonae (strain ATCC BAA-731 / CDC346-86 / RSK2980)).